Here is a 484-residue protein sequence, read N- to C-terminus: Probable glycine dehydrogenase (decarboxylating) subunit 2 (484 aa).

At lysine 264 the chain carries N6-(pyridoxal phosphate)lysine.

It belongs to the GcvP family. C-terminal subunit subfamily. In terms of assembly, the glycine cleavage system is composed of four proteins: P, T, L and H. In this organism, the P 'protein' is a heterodimer of two subunits. Pyridoxal 5'-phosphate is required as a cofactor.

It carries out the reaction N(6)-[(R)-lipoyl]-L-lysyl-[glycine-cleavage complex H protein] + glycine + H(+) = N(6)-[(R)-S(8)-aminomethyldihydrolipoyl]-L-lysyl-[glycine-cleavage complex H protein] + CO2. Functionally, the glycine cleavage system catalyzes the degradation of glycine. The P protein binds the alpha-amino group of glycine through its pyridoxal phosphate cofactor; CO(2) is released and the remaining methylamine moiety is then transferred to the lipoamide cofactor of the H protein. The protein is Probable glycine dehydrogenase (decarboxylating) subunit 2 of Legionella pneumophila (strain Paris).